A 250-amino-acid chain; its full sequence is HTH-type transcriptional regulator SarS (250 aa).

DNA-binding regions (H-T-H motif) lie at residues 53-76 (FKKI…VLVK) and 177-200 (LKDL…NLKK).

The protein belongs to the SarA family.

The protein resides in the cytoplasm. Transcriptional regulator that controls expression of some virulence factors in a cell density-dependent manner. This is HTH-type transcriptional regulator SarS (sarS) from Staphylococcus aureus (strain MRSA252).